Consider the following 951-residue polypeptide: MSKTNKSKSGSRSSRSRSASRSRSRSFSKSRSRSRSVSRSRKRRLSSRSRSRSYSPAHNRERNHPRVYQNRDFRGHNRGYRRPYYFRGRNRGFYPWGQYNRGGYGNYRSNWQNYRQAYSPRRGRSRSRSPKRRSPSPRSRSHSRNSDKSSSDRSRRSSSSRSSSNHSRVESSKRKSTKEKKSSSKDSRPSQAAGDNQGDEAKEQTFSGGTSQDIKGSESSKPWPDATTYGAGSASRASVSDLSPRERSPALKSPLQSVVVRRRSPRPSPVPKPSPPLSNASQMGSSMSGGAGYQSGAHQGQFDHGSGSLSPSKKSPVGKSPPATGSAYGSSQKEESAASGGAAYSKRYLEEQKTENGKDKEQKQTNADKEKLKEKGGFSDADVKMKSDPFAPKTDSEKPFRGSQSPKRYKLRDDFEKKMADFHKEELDEHDKDKSKGRKEPEFDDEPKFMSKVIAGASKNQEEEKSGKWESLHTGKEKQRKAEEMEDEPFTERSRKEERGGSKRSESGHRGFVPEKNFRVTAYKAVQEKSSSPPPRKTSESRDKLGSKGDFSSGKSSFSITREAQVNVRMDSFDEDLARPSGLLAQERKLCRDLVHSNKKEQEFRSIFQHIQSAQSQRSPSELFAQHIVTIVHHVKEHHFGSSGMTLHERFTKYLKRGNEQEAAKNKKSPEIHRRIDISPSTFRKHGLTHEELKSPREPGYKAEGKYKDDPVDLRLDIERRKKHKERDLKRGKSRESVDSRDSSHSRERSTEKTEKTHKGSKKQKKHRRARDRSRSSSSSSQSSHSYKAEEYPEEAEEREESTSGFDKSRLGTKDFVGPNERGGRARGTFQFRARGRGWGRGNYSGNNNNNSNNDFQKRSREEEWDPEYTPKSKKYYLHDDREGEGSDKWMGRGRGRGAFPRGRGRFMFRKSSTSPKWAHDKFSGEEGEIEDDESGTENREEKDSLQPSAE.

Low complexity predominate over residues 1 to 13; sequence MSKTNKSKSGSRS. The tract at residues 1-94 is disordered; it reads MSKTNKSKSG…YFRGRNRGFY (94 aa). Ser-2 bears the N-acetylserine mark. Residues 2 to 190 are required for mRNA splicing activation; that stretch reads SKTNKSKSGS…KSSSKDSRPS (189 aa). A compositionally biased stretch (basic residues) spans 14-51; sequence SRSRSASRSRSRSFSKSRSRSRSVSRSRKRRLSSRSRS. Position 17 is a dimethylated arginine (Arg-17). Residues 58-75 are compositionally biased toward basic and acidic residues; sequence HNRERNHPRVYQNRDFRG. Asymmetric dimethylarginine is present on Arg-66. Residues 82–94 are compositionally biased toward low complexity; that stretch reads RPYYFRGRNRGFY. Residues Arg-101 and Arg-108 each carry the asymmetric dimethylarginine modification. The disordered stretch occupies residues 117 to 558; sequence AYSPRRGRSR…GDFSSGKSSF (442 aa). The span at 121–143 shows a compositional bias: basic residues; the sequence is RRGRSRSRSPKRRSPSPRSRSHS. Positions 144–155 are enriched in basic and acidic residues; sequence RNSDKSSSDRSR. Residues 157–166 are compositionally biased toward low complexity; sequence SSSSRSSSNH. The span at 167–188 shows a compositional bias: basic and acidic residues; it reads SRVESSKRKSTKEKKSSSKDSR. Lys-202 participates in a covalent cross-link: Glycyl lysine isopeptide (Lys-Gly) (interchain with G-Cter in SUMO1); alternate. A Glycyl lysine isopeptide (Lys-Gly) (interchain with G-Cter in SUMO2); alternate cross-link involves residue Lys-202. Polar residues predominate over residues 204 to 220; that stretch reads QTFSGGTSQDIKGSESS. Lys-215 participates in a covalent cross-link: Glycyl lysine isopeptide (Lys-Gly) (interchain with G-Cter in SUMO2). Position 220 is a phosphoserine (Ser-220). Residue Lys-221 forms a Glycyl lysine isopeptide (Lys-Gly) (interchain with G-Cter in SUMO2); alternate linkage. At Lys-221 the chain carries N6-acetyllysine; alternate. A phosphoserine mark is found at Ser-233, Ser-238, Ser-240, Ser-243, and Ser-248. Lys-252 is covalently cross-linked (Glycyl lysine isopeptide (Lys-Gly) (interchain with G-Cter in SUMO2); alternate). N6-methyllysine; alternate is present on Lys-252. A phosphoserine mark is found at Ser-253 and Ser-257. Residues 266 to 276 are compositionally biased toward pro residues; that stretch reads RPSPVPKPSPP. Residues 305-322 show a composition bias toward low complexity; the sequence is GSGSLSPSKKSPVGKSPP. 2 positions are modified to phosphoserine: Ser-315 and Ser-320. Thr-324 carries the phosphothreonine modification. Ser-326 bears the Phosphoserine mark. A Phosphotyrosine modification is found at Tyr-328. Residue Lys-333 forms a Glycyl lysine isopeptide (Lys-Gly) (interchain with G-Cter in SUMO2) linkage. Positions 337–346 are enriched in low complexity; that stretch reads AASGGAAYSK. Ser-339 is subject to Phosphoserine. Residue Lys-346 forms a Glycyl lysine isopeptide (Lys-Gly) (interchain with G-Cter in SUMO2); alternate linkage. The residue at position 346 (Lys-346) is an N6-acetyllysine; alternate. Basic and acidic residues predominate over residues 347-387; the sequence is RYLEEQKTENGKDKEQKQTNADKEKLKEKGGFSDADVKMKS. Glycyl lysine isopeptide (Lys-Gly) (interchain with G-Cter in SUMO2) cross-links involve residues Lys-353 and Lys-375. The tract at residues 359 to 951 is required for mRNA decay activity; it reads DKEQKQTNAD…EKDSLQPSAE (593 aa). Ser-379 carries the phosphoserine modification. Lys-384 is covalently cross-linked (Glycyl lysine isopeptide (Lys-Gly) (interchain with G-Cter in SUMO1); alternate). Residue Lys-384 forms a Glycyl lysine isopeptide (Lys-Gly) (interchain with G-Cter in SUMO2); alternate linkage. Glycyl lysine isopeptide (Lys-Gly) (interchain with G-Cter in SUMO2) cross-links involve residues Lys-386 and Lys-393. Phosphothreonine is present on Thr-394. A Glycyl lysine isopeptide (Lys-Gly) (interchain with G-Cter in SUMO2) cross-link involves residue Lys-398. A phosphoserine mark is found at Ser-403 and Ser-405. Basic and acidic residues predominate over residues 411 to 449; the sequence is LRDDFEKKMADFHKEELDEHDKDKSKGRKEPEFDDEPKF. Residues Lys-418 and Lys-424 each participate in a glycyl lysine isopeptide (Lys-Gly) (interchain with G-Cter in SUMO2) cross-link. Lys-448 participates in a covalent cross-link: Glycyl lysine isopeptide (Lys-Gly) (interchain with G-Cter in SUMO1); alternate. Residues Lys-448 and Lys-452 each participate in a glycyl lysine isopeptide (Lys-Gly) (interchain with G-Cter in SUMO2); alternate cross-link. At Lys-452 the chain carries N6-acetyllysine; alternate. Glycyl lysine isopeptide (Lys-Gly) (interchain with G-Cter in SUMO2) cross-links involve residues Lys-459 and Lys-465. Basic and acidic residues-rich tracts occupy residues 460 to 483 and 490 to 518; these read NQEEEKSGKWESLHTGKEKQRKAE and FTERSRKEERGGSKRSESGHRGFVPEKNF. Ser-466 is modified (phosphoserine). Glycyl lysine isopeptide (Lys-Gly) (interchain with G-Cter in SUMO2); alternate cross-links involve residues Lys-468 and Lys-476. Lys-468 and Lys-476 each carry N6-acetyllysine; alternate. A Glycyl lysine isopeptide (Lys-Gly) (interchain with G-Cter in SUMO2) cross-link involves residue Lys-481. The residue at position 516 (Lys-516) is an N6-acetyllysine. A Glycyl lysine isopeptide (Lys-Gly) (interchain with G-Cter in SUMO2); alternate cross-link involves residue Lys-524. Position 524 is an N6-acetyllysine; alternate (Lys-524). Ser-532 carries the post-translational modification Phosphoserine. The segment covering 537–547 has biased composition (basic and acidic residues); sequence KTSESRDKLGS. Lys-548 participates in a covalent cross-link: Glycyl lysine isopeptide (Lys-Gly) (interchain with G-Cter in SUMO2). Residues 548-558 are compositionally biased toward low complexity; that stretch reads KGDFSSGKSSF. 549 to 556 contacts ATP; that stretch reads GDFSSGKS. A Glycyl lysine isopeptide (Lys-Gly) (interchain with G-Cter in SUMO2); alternate cross-link involves residue Lys-555. The residue at position 555 (Lys-555) is an N6-acetyllysine; alternate. Phosphoserine occurs at positions 557, 559, and 572. Lys-599 participates in a covalent cross-link: Glycyl lysine isopeptide (Lys-Gly) (interchain with G-Cter in SUMO2). A phosphoserine mark is found at Ser-616, Ser-619, Ser-669, Ser-679, and Ser-681. Basic and acidic residues predominate over residues 660–677; that stretch reads EQEAAKNKKSPEIHRRID. The interval 660 to 951 is disordered; the sequence is EQEAAKNKKS…EKDSLQPSAE (292 aa). A compositionally biased stretch (basic and acidic residues) spans 688–758; that stretch reads LTHEELKSPR…RSTEKTEKTH (71 aa). Lys-694 participates in a covalent cross-link: Glycyl lysine isopeptide (Lys-Gly) (interchain with G-Cter in SUMO2). Ser-695 carries the post-translational modification Phosphoserine. Glycyl lysine isopeptide (Lys-Gly) (interchain with G-Cter in SUMO2) cross-links involve residues Lys-702, Lys-706, Lys-708, Lys-753, and Lys-756. Residues 759 to 772 are compositionally biased toward basic residues; that stretch reads KGSKKQKKHRRARD. The span at 776 to 786 shows a compositional bias: low complexity; it reads SSSSSSQSSHS. Lys-808 carries the post-translational modification N6-acetyllysine. Arg-841 carries the post-translational modification Asymmetric dimethylarginine. Residues 844–854 are compositionally biased toward low complexity; sequence YSGNNNNNSNN. Phosphoserine is present on Ser-860. Thr-870 carries the post-translational modification Phosphothreonine. Residues Lys-872 and Lys-875 each participate in a glycyl lysine isopeptide (Lys-Gly) (interchain with G-Cter in SUMO2) cross-link. Residues 877-891 are compositionally biased toward basic and acidic residues; the sequence is YLHDDREGEGSDKWM. A phosphoserine mark is found at Ser-924 and Ser-935. Residues 926–936 are compositionally biased toward acidic residues; it reads EEGEIEDDESG.

The protein belongs to the BCLAF1/THRAP3 family. As to quaternary structure, associated with the large multiprotein complex TRAP (Mediator complex-like). Interacts with SFPQ; the interaction is dependent on SFPQ phosphorylation at 'Thr-687' and inhibits binding of SFPQ to an ESS1 exonic splicing silencer element-containing RNA. Interacts with NXF1. Component of the SNARP complex which consists at least of SNIP1, SNW1, THRAP3, BCLAF1 and PNN. Associated with spliced mRNP complexes. Interacts with HELZ2 and PPARG. Interacts with CLOCK and BMAL1. Component of a MACOM-like complex, named WTAP complex, composed of WTAP, ZC3H13, CBLL1, KIAA1429, RBM15, BCLAF1 and THRAP3.

It is found in the nucleus. The protein localises to the nucleoplasm. Its subcellular location is the nucleus speckle. Its function is as follows. Involved in pre-mRNA splicing. Remains associated with spliced mRNA after splicing which probably involves interactions with the exon junction complex (EJC). Can trigger mRNA decay which seems to be independent of nonsense-mediated decay involving premature stop codons (PTC) recognition. May be involved in nuclear mRNA decay. Involved in regulation of signal-induced alternative splicing. During splicing of PTPRC/CD45 is proposed to sequester phosphorylated SFPQ from PTPRC/CD45 pre-mRNA in resting T-cells. Involved in cyclin-D1/CCND1 mRNA stability probably by acting as component of the SNARP complex which associates with both the 3'end of the CCND1 gene and its mRNA. Involved in response to DNA damage. Is excluced from DNA damage sites in a manner that parallels transcription inhibition; the function may involve the SNARP complex. Initially thought to play a role in transcriptional coactivation through its association with the TRAP complex; however, it is not regarded as a stable Mediator complex subunit. Cooperatively with HELZ2, enhances the transcriptional activation mediated by PPARG, maybe through the stabilization of the PPARG binding to DNA in presence of ligand. May play a role in the terminal stage of adipocyte differentiation. Plays a role in the positive regulation of the circadian clock. Acts as a coactivator of the CLOCK-BMAL1 heterodimer and promotes its transcriptional activator activity and binding to circadian target genes. The chain is Thyroid hormone receptor-associated protein 3 (Thrap3) from Mus musculus (Mouse).